A 278-amino-acid polypeptide reads, in one-letter code: Large ribosomal subunit protein uL2 (278 aa).

Disordered regions lie at residues 29–55 (PEKS…RHQG) and 225–278 (VMNP…NKKR). Residues 258-278 (RSNKKASNKYIVRRRTKNKKR) are compositionally biased toward basic residues.

This sequence belongs to the universal ribosomal protein uL2 family. As to quaternary structure, part of the 50S ribosomal subunit. Forms a bridge to the 30S subunit in the 70S ribosome. The N-terminus is blocked. In terms of processing, phosphorylated on serine and threonine residues.

Its function is as follows. One of the primary rRNA binding proteins. Required for association of the 30S and 50S subunits to form the 70S ribosome, for tRNA binding and peptide bond formation. It has been suggested to have peptidyltransferase activity; this is somewhat controversial. Makes several contacts with the 16S rRNA in the 70S ribosome. The chain is Large ribosomal subunit protein uL2 from Streptomyces collinus.